A 404-amino-acid polypeptide reads, in one-letter code: Glucose-1-phosphate adenylyltransferase (404 aa).

Residues Tyr-99, Gly-164, 179-180, and Ser-197 each bind alpha-D-glucose 1-phosphate; that span reads EK.

It belongs to the bacterial/plant glucose-1-phosphate adenylyltransferase family.

The catalysed reaction is alpha-D-glucose 1-phosphate + ATP + H(+) = ADP-alpha-D-glucose + diphosphate. It participates in capsule biogenesis; capsule polysaccharide biosynthesis. Its pathway is glycan biosynthesis; glycogen biosynthesis. Functionally, involved in the biosynthesis of ADP-glucose, a building block, required in the biosynthesis of maltose-1-phosphate (M1P) and in the elongation reactions to produce linear alpha-1,4-glucans. Catalyzes the reaction between ATP and alpha-D-glucose 1-phosphate (G1P) to produce pyrophosphate and ADP-Glc. This Mycobacterium marinum (strain ATCC BAA-535 / M) protein is Glucose-1-phosphate adenylyltransferase.